The chain runs to 132 residues: Small ribosomal subunit protein uS8 (132 aa).

Belongs to the universal ribosomal protein uS8 family. Part of the 30S ribosomal subunit. Contacts proteins S5 and S12.

In terms of biological role, one of the primary rRNA binding proteins, it binds directly to 16S rRNA central domain where it helps coordinate assembly of the platform of the 30S subunit. This chain is Small ribosomal subunit protein uS8, found in Rubrobacter xylanophilus (strain DSM 9941 / JCM 11954 / NBRC 16129 / PRD-1).